We begin with the raw amino-acid sequence, 675 residues long: Alpha-1,4-glucan:maltose-1-phosphate maltosyltransferase 1 (675 aa).

Positions 264, 324, and 359 each coordinate alpha-maltose 1-phosphate. Residue D394 is the Nucleophile of the active site. N395 contributes to the alpha-maltose 1-phosphate binding site. Catalysis depends on E423, which acts as the Proton donor. Alpha-maltose 1-phosphate is bound at residue 534–535; it reads KY.

It belongs to the glycosyl hydrolase 13 family. GlgE subfamily. Homodimer.

The enzyme catalyses alpha-maltose 1-phosphate + [(1-&gt;4)-alpha-D-glucosyl](n) = [(1-&gt;4)-alpha-D-glucosyl](n+2) + phosphate. Its activity is regulated as follows. Is competitively inhibited by alpha-, beta- and gamma-cyclodextrins (cyclic maltooligosaccharides), unlike GlgE from M.tuberculosis. Maltosyltransferase that uses maltose 1-phosphate (M1P) as the sugar donor to elongate linear or branched alpha-(1-&gt;4)-glucans. Maltooligosaccharides with a degree of polymerization (DP) superior or equal to 4 are efficient acceptors, with DP6 being optimal in the GlgE-catalyzed polymerization with M1P. Is specific for the alpha-anomer of M1P as substrate, since the beta-anomer of M1P gives no activity. Alpha-D-glucose 1-phosphate cannot serve as a donor substrate, but alpha-maltosyl fluoride is an efficient donor in vitro. Exhibits an alpha-retaining catalytic mechanism, with evidence that maltooligosaccharide acceptors are extended at their non-reducing ends. Is also able to catalyze the reverse reaction in vitro, releasing M1P from glycogen or maltoheptaose in the presence of inorganic phosphate. Also catalyzes disproportionation reactions through maltosyl transfer between maltooligosaccharides. Is probably involved in a branched alpha-glucan biosynthetic pathway from trehalose, together with TreS, Mak and GlgB. This Streptomyces coelicolor (strain ATCC BAA-471 / A3(2) / M145) protein is Alpha-1,4-glucan:maltose-1-phosphate maltosyltransferase 1 (glgE1).